A 272-amino-acid polypeptide reads, in one-letter code: Acidic leucine-rich nuclear phosphoprotein 32-related protein 2 (272 aa).

3 LRR repeats span residues 57–78 (SLEE…PRLP), 79–100 (ALRR…AAVA), and 106–127 (TLRH…APLA). Positions 139 to 184 (CPVTKAKGYRDKVFALIPSLKFLDGMDAEGNDCLDSDDEEDEEEDE) constitute an LRRCT domain. Residues 163–272 (GMDAEGNDCL…DSEDDANGDN (110 aa)) form a disordered region. The span at 164-241 (MDAEGNDCLD…DEAGADEEDE (78 aa)) shows a compositional bias: acidic residues. Residues 248 to 257 (SKGSSGSAQP) show a composition bias toward polar residues.

This sequence belongs to the ANP32 family.

The sequence is that of Acidic leucine-rich nuclear phosphoprotein 32-related protein 2 from Oryza sativa subsp. japonica (Rice).